We begin with the raw amino-acid sequence, 1820 residues long: Cation channel sperm-associated targeting subunit tau (1820 aa).

In terms of domain architecture, C2 spans Asp-87 to Gln-222. Disordered stretches follow at residues Ser-360–Asn-383, Leu-403–His-443, Glu-695–Glu-722, and Ser-838–Ser-857. Polar residues predominate over residues Pro-415–His-443.

In terms of assembly, component of the CatSper complex or CatSpermasome composed of the core pore-forming members CATSPER1, CATSPER2, CATSPER3 and CATSPER4 as well as auxiliary members CATSPERB, CATSPERG, CATSPERD, CATSPERE, CATSPERZ, C2CD6/CATSPERT, TMEM249, TMEM262 and EFCAB9. HSPA1 may be an additional auxiliary complex member. The core complex members CATSPER1, CATSPER2, CATSPER3 and CATSPER4 form a heterotetrameric channel. The auxiliary CATSPERB, CATSPERG, CATSPERD and CATSPERE subunits form a pavilion-like structure over the pore which stabilizes the complex through interactions with CATSPER4, CATSPER3, CATSPER1 and CATSPER2 respectively. SLCO6C1 interacts with CATSPERE and TMEM262/CATSPERH interacts with CATSPERB, further stabilizing the complex. C2CD6/CATSPERT interacts at least with CATSPERD and is required for targeting the CatSper complex in the flagellar membrane. As to expression, expressed in testis (at protein level).

The protein resides in the cell projection. The protein localises to the cilium. It is found in the flagellum membrane. Its function is as follows. Auxiliary component of the CatSper complex, a complex involved in sperm cell hyperactivation. Sperm cell hyperactivation is needed for sperm motility which is essential late in the preparation of sperm for fertilization. Required for CatSper complex targeting and trafficking into the quadrilinear nanodomains. Targets the preassembled CatSper complexes to elongating flagella, where it links the channel-carrying vesicles and motor proteins. This Homo sapiens (Human) protein is Cation channel sperm-associated targeting subunit tau.